The chain runs to 331 residues: Laforin (331 aa).

The 124-residue stretch at 1–124 (MLFRFGVVVP…NNLVDGVYCL (124 aa)) folds into the CBM20 domain. Position 25 is a phosphoserine; by AMPK (Ser25). Residues Trp32, Lys87, 103-107 (GPHHD), Asp197, Asp235, and Arg241 each bind substrate. One can recognise a Tyrosine-protein phosphatase domain in the interval 156-323 (HYSRILPNIW…QQDFFQKFGK (168 aa)). Catalysis depends on Cys266, which acts as the Phosphocysteine intermediate. The Glucan phosphatase signature motif CXAGXGR motif lies at 266–272 (CNAGVGR). Residues 267–272 (NAGVGR) and Tyr304 contribute to the substrate site.

The protein belongs to the protein-tyrosine phosphatase family. In terms of assembly, homodimer. Interacts with itself. Interacts with PPP1R3B, PPP1R3C, PPP1R3D, HIRIP5, and EPM2AIP1. Binds glycogen and Lafora bodies. Interacts with NHLRC1/malin (via the NHL repeats). Forms a complex with NHLRC1/malin and HSP70. Interacts with PPP1R3D; in the presence of NHLC1/malin the interaction leads to ubiquitination and autophagic degradation of PPP1R3D. Interacts (via the phosphatase domain) with MAPT/Tau; the interaction dephosphorylates MAPT. Interacts with PRDM8. Polyubiquitinated by NHLRC1/malin. Post-translationally, phosphorylation on Ser-25 by AMPK affects the phosphatase activity of the enzyme and its ability to homodimerize and interact with NHLRC1, PPP1R3C or PRKAA2. As to expression, widely expressed.

The protein localises to the cytoplasm. The protein resides in the endoplasmic reticulum membrane. Its subcellular location is the cell membrane. The enzyme catalyses O-phospho-L-tyrosyl-[protein] + H2O = L-tyrosyl-[protein] + phosphate. It carries out the reaction O-phospho-L-seryl-[protein] + H2O = L-seryl-[protein] + phosphate. The catalysed reaction is O-phospho-L-threonyl-[protein] + H2O = L-threonyl-[protein] + phosphate. Functionally, plays an important role in preventing glycogen hyperphosphorylation and the formation of insoluble aggregates, via its activity as glycogen phosphatase, and by promoting the ubiquitination of proteins involved in glycogen metabolism via its interaction with the E3 ubiquitin ligase NHLRC1/malin. Dephosphorylates phosphotyrosine and synthetic substrates, such as para-nitrophenylphosphate (pNPP), and has low activity with phosphoserine and phosphothreonine substrates (in vitro). Has also been shown to dephosphorylate MAPT. Shows strong phosphatase activity towards complex carbohydrates in vitro, avoiding glycogen hyperphosphorylation which is associated with reduced branching and formation of insoluble aggregates. Forms a complex with NHLRC1/malin and HSP70, which suppresses the cellular toxicity of misfolded proteins by promoting their degradation through the ubiquitin-proteasome system (UPS). Acts as a scaffold protein to facilitate PPP1R3C/PTG ubiquitination by NHLRC1/malin. Also promotes proteasome-independent protein degradation through the macroautophagy pathway. This chain is Laforin (Epm2a), found in Rattus norvegicus (Rat).